The chain runs to 327 residues: Pumilio homolog 18 (327 aa).

In terms of domain architecture, PUM-HD spans methionine 1–arginine 324. 6 Pumilio repeats span residues serine 79–alanine 114, isoleucine 115–glutamate 149, arginine 150–leucine 185, glutamate 186–valine 222, asparagine 223–glycine 260, and cysteine 261–tryptophan 295.

It localises to the cytoplasm. Sequence-specific RNA-binding protein that regulates translation and mRNA stability by binding the 3'-UTR of target mRNAs. The protein is Pumilio homolog 18 (APUM18) of Arabidopsis thaliana (Mouse-ear cress).